Here is a 426-residue protein sequence, read N- to C-terminus: Glutamyl-tRNA reductase (426 aa).

Residues 50-53, Ser108, 113-115, and Gln119 each bind substrate; these read TCNR and EPQ. Cys51 serves as the catalytic Nucleophile. An NADP(+)-binding site is contributed by 188-193; that stretch reads GAGEMI.

This sequence belongs to the glutamyl-tRNA reductase family. As to quaternary structure, homodimer.

The enzyme catalyses (S)-4-amino-5-oxopentanoate + tRNA(Glu) + NADP(+) = L-glutamyl-tRNA(Glu) + NADPH + H(+). Its pathway is porphyrin-containing compound metabolism; protoporphyrin-IX biosynthesis; 5-aminolevulinate from L-glutamyl-tRNA(Glu): step 1/2. Catalyzes the NADPH-dependent reduction of glutamyl-tRNA(Glu) to glutamate 1-semialdehyde (GSA). This Polaromonas sp. (strain JS666 / ATCC BAA-500) protein is Glutamyl-tRNA reductase.